Here is a 257-residue protein sequence, read N- to C-terminus: UPF0246 protein BAV2675 (257 aa).

It belongs to the UPF0246 family.

This chain is UPF0246 protein BAV2675, found in Bordetella avium (strain 197N).